Here is a 125-residue protein sequence, read N- to C-terminus: Large ribosomal subunit protein bL12 (125 aa).

It belongs to the bacterial ribosomal protein bL12 family. In terms of assembly, homodimer. Part of the ribosomal stalk of the 50S ribosomal subunit. Forms a multimeric L10(L12)X complex, where L10 forms an elongated spine to which 2 to 4 L12 dimers bind in a sequential fashion. Binds GTP-bound translation factors.

Its function is as follows. Forms part of the ribosomal stalk which helps the ribosome interact with GTP-bound translation factors. Is thus essential for accurate translation. In Methylorubrum extorquens (strain CM4 / NCIMB 13688) (Methylobacterium extorquens), this protein is Large ribosomal subunit protein bL12.